Consider the following 422-residue polypeptide: 5-hydroxytryptamine receptor 1A (422 aa).

The disordered stretch occupies residues 1 to 23 (MDVLSPGQGNNTTSPPAPFETGG). Topologically, residues 1–38 (MDVLSPGQGNNTTSPPAPFETGGNTTGISDVTFSYQVI) are extracellular. N-linked (GlcNAc...) asparagine glycosylation is found at Asn-10, Asn-11, and Asn-24. Residues 39–59 (TSLLLGTLIFCAVLGNACVVA) form a helical membrane-spanning segment. Residues 60–73 (AIALERSLQNVANY) are Cytoplasmic-facing. The helical transmembrane segment at 74-98 (LIGSLAVTDLMVSVLVLPMAALYQV) threads the bilayer. Residues 99 to 107 (LNKWTLGQV) are Extracellular-facing. The helical transmembrane segment at 108–132 (TCDLFIALDVLCCTSSILHLCAIAL) threads the bilayer. Cys-109 and Cys-187 are joined by a disulfide. Residues Asp-116 and Cys-120 each contribute to the serotonin site. The DRY motif; important for ligand-induced conformation changes signature appears at 133–135 (DRY). Residues 133-152 (DRYWAITDPIDYVNKRTPRR) are Cytoplasmic-facing. Residues 153–174 (AAALISLTWLIGFLISIPPMLG) traverse the membrane as a helical segment. Residues 175–193 (WRTPEDRSDPDACTISKDH) are Extracellular-facing. A helical transmembrane segment spans residues 194–216 (GYTIYSTFGAFYIPLLLMLVLYG). Residues 217 to 346 (RIFRAARFRI…LARERKTVKT (130 aa)) are Cytoplasmic-facing. The tract at residues 235–263 (KTGADTHHGASPAPQPKKSVNGESGSRNW) is disordered. 1D-myo-inositol 4-phosphate is bound by residues Thr-314, Lys-345, Thr-346, and Gly-352. The helical transmembrane segment at 347-370 (LGIIMGTFILCWLPFFIVALVLPF) threads the bilayer. Residues 371-378 (CESSCHMP) are Extracellular-facing. A helical membrane pass occupies residues 379–403 (TLLGAIINWLGYSNSLLNPVIYAYF). The short motif at 396 to 400 (NPVIY) is the NPxxY motif; important for ligand-induced conformation changes and signaling element. 1D-myo-inositol 4-phosphate is bound by residues Phe-403, Asn-404, and Lys-405. Topologically, residues 404 to 422 (NKDFQNAFKKIIKCKFCRQ) are cytoplasmic.

This sequence belongs to the G-protein coupled receptor 1 family. 5-hydroxytryptamine receptor subfamily. HTR1A sub-subfamily. Heterodimer; heterodimerizes with GPER1. Interacts with YIF1B. Interacts with GPR39 and GALR1.

The protein resides in the cell membrane. Its subcellular location is the cell projection. It is found in the dendrite. With respect to regulation, G-protein coupled receptor activity is regulated by lipids: phosphatidylinositol 4-phosphate increases HTR1A-mediated activity. In terms of biological role, G-protein coupled receptor for 5-hydroxytryptamine (serotonin). Also functions as a receptor for various drugs and psychoactive substances. Ligand binding causes a conformation change that triggers signaling via guanine nucleotide-binding proteins (G proteins) and modulates the activity of downstream effectors, such as adenylate cyclase. HTR1A is coupled to G(i)/G(o) G alpha proteins and mediates inhibitory neurotransmission: signaling inhibits adenylate cyclase activity and activates a phosphatidylinositol-calcium second messenger system that regulates the release of Ca(2+) ions from intracellular stores. Beta-arrestin family members regulate signaling by mediating both receptor desensitization and resensitization processes. This chain is 5-hydroxytryptamine receptor 1A (HTR1A), found in Pongo pygmaeus (Bornean orangutan).